The following is a 423-amino-acid chain: Nucleoporin NUP42 (423 aa).

Residues methionine 1–alanine 25 form a C3H1-type zinc finger. Residues phenylalanine 14–glycine 15 form an FG 1 repeat. A disordered region spans residues glycine 24–serine 85. The segment covering serine 40–tryptophan 69 has biased composition (polar residues). Positions glycine 94–asparagine 170 are interaction with HIV-1 Vpr. The stretch at phenylalanine 95–glycine 96 is one FG 2 repeat. At serine 106 the chain carries Phosphoserine. FG repeat units lie at residues phenylalanine 218–glycine 219, phenylalanine 220–glycine 221, phenylalanine 265–glycine 266, phenylalanine 271–glycine 272, phenylalanine 288–glycine 289, phenylalanine 290–glycine 291, phenylalanine 311–glycine 312, phenylalanine 336–glycine 337, phenylalanine 345–glycine 346, and phenylalanine 364–glycine 365. The interval glycine 365–valine 423 is interaction with GLE1.

Probable component of the nuclear pore complex (NPC). Interacts with nuclear export protein NXF1. Interacts with GLE1. Able to form a heterotrimer with NUP155 and GLE1 in vitro. Interacts with XPO1. In terms of assembly, (Microbial infection) Interacts with the HIV-1 virus proteins Rev and Vpr. The interaction with HIV-1 Rev, a protein that mediates nuclear export of unspliced viral RNAs, suggests that its function may be bypassed by the HIV-1 virus. Post-translationally, O-glycosylated. In terms of tissue distribution, ubiquitously expressed.

The protein resides in the nucleus. The protein localises to the nuclear pore complex. Its subcellular location is the nucleus membrane. In terms of biological role, required for the export of mRNAs containing poly(A) tails from the nucleus into the cytoplasm. Its function is as follows. (Microbial infection) In case of infection by HIV-1, it may participate in the docking of viral Vpr at the nuclear envelope. This is Nucleoporin NUP42 from Homo sapiens (Human).